The sequence spans 137 residues: Proofreading thioesterase EntH (137 aa).

Glutamate 63 acts as the Nucleophile or proton acceptor in catalysis.

Belongs to the thioesterase PaaI family. As to quaternary structure, homotetramer. Dimer of dimers. Interacts specifically with the aryl carrier protein (ArCP) domain of EntB.

Its subcellular location is the cytoplasm. Its pathway is siderophore biosynthesis; enterobactin biosynthesis. Its function is as follows. Required for optimal enterobactin synthesis. Acts as a proofreading enzyme that prevents EntB misacylation by hydrolyzing the thioester bound existing between EntB and wrongly charged molecules. The polypeptide is Proofreading thioesterase EntH (Salmonella paratyphi A (strain AKU_12601)).